Consider the following 1001-residue polypeptide: 2-oxoglutarate dehydrogenase E1 component (1001 aa).

The protein belongs to the alpha-ketoglutarate dehydrogenase family. Homodimer. Part of the 2-oxoglutarate dehydrogenase (OGDH) complex composed of E1 (2-oxoglutarate dehydrogenase), E2 (dihydrolipoamide succinyltransferase) and E3 (dihydrolipoamide dehydrogenase); the complex contains multiple copies of the three enzymatic components (E1, E2 and E3). Thiamine diphosphate serves as cofactor.

It catalyses the reaction N(6)-[(R)-lipoyl]-L-lysyl-[protein] + 2-oxoglutarate + H(+) = N(6)-[(R)-S(8)-succinyldihydrolipoyl]-L-lysyl-[protein] + CO2. Functionally, E1 component of the 2-oxoglutarate dehydrogenase (OGDH) complex which catalyzes the decarboxylation of 2-oxoglutarate, the first step in the conversion of 2-oxoglutarate to succinyl-CoA and CO(2). In Brucella anthropi (strain ATCC 49188 / DSM 6882 / CCUG 24695 / JCM 21032 / LMG 3331 / NBRC 15819 / NCTC 12168 / Alc 37) (Ochrobactrum anthropi), this protein is 2-oxoglutarate dehydrogenase E1 component.